Consider the following 542-residue polypeptide: Chaperonin GroEL 3 (542 aa).

ATP contacts are provided by residues 30-33, Lys-51, 87-91, Gly-415, and Asp-496; these read TLGP and DGTTT.

It belongs to the chaperonin (HSP60) family. In terms of assembly, forms a cylinder of 14 subunits composed of two heptameric rings stacked back-to-back. Interacts with the co-chaperonin GroES.

It is found in the cytoplasm. The enzyme catalyses ATP + H2O + a folded polypeptide = ADP + phosphate + an unfolded polypeptide.. Functionally, together with its co-chaperonin GroES, plays an essential role in assisting protein folding. The GroEL-GroES system forms a nano-cage that allows encapsulation of the non-native substrate proteins and provides a physical environment optimized to promote and accelerate protein folding. In Sinorhizobium medicae (strain WSM419) (Ensifer medicae), this protein is Chaperonin GroEL 3.